We begin with the raw amino-acid sequence, 367 residues long: Dual-specificity RNA methyltransferase RlmN (367 aa).

Catalysis depends on E91, which acts as the Proton acceptor. The region spanning 102-337 (GKVRMTQCLS…AIIRKSKGQD (236 aa)) is the Radical SAM core domain. A disulfide bridge connects residues C109 and C342. 3 residues coordinate [4Fe-4S] cluster: C116, C120, and C123. Residues 169-170 (GE), S201, 223-225 (SLH), and N299 each bind S-adenosyl-L-methionine. C342 (S-methylcysteine intermediate) is an active-site residue.

This sequence belongs to the radical SAM superfamily. RlmN family. Requires [4Fe-4S] cluster as cofactor.

The protein localises to the cytoplasm. It carries out the reaction adenosine(2503) in 23S rRNA + 2 reduced [2Fe-2S]-[ferredoxin] + 2 S-adenosyl-L-methionine = 2-methyladenosine(2503) in 23S rRNA + 5'-deoxyadenosine + L-methionine + 2 oxidized [2Fe-2S]-[ferredoxin] + S-adenosyl-L-homocysteine. The catalysed reaction is adenosine(37) in tRNA + 2 reduced [2Fe-2S]-[ferredoxin] + 2 S-adenosyl-L-methionine = 2-methyladenosine(37) in tRNA + 5'-deoxyadenosine + L-methionine + 2 oxidized [2Fe-2S]-[ferredoxin] + S-adenosyl-L-homocysteine. Its function is as follows. Specifically methylates position 2 of adenine 2503 in 23S rRNA and position 2 of adenine 37 in tRNAs. m2A2503 modification seems to play a crucial role in the proofreading step occurring at the peptidyl transferase center and thus would serve to optimize ribosomal fidelity. The sequence is that of Dual-specificity RNA methyltransferase RlmN from Nitratidesulfovibrio vulgaris (strain DSM 19637 / Miyazaki F) (Desulfovibrio vulgaris).